Here is a 302-residue protein sequence, read N- to C-terminus: MSGPVLSHLEQLEAESIQIFREVAAEFDNPVMLYSIGKDSSVLLHLARKAFYPGKIPFPLLHVDTDWKFREMIKFRDEAAVKYGFDLLVHKNPEGLAMGMNPFTFGSSKHTDVMKTEGLKQALNKYGFDAAFGGARRDEEKSRAKERVYSFRDSKHRWDPKNQRPELWHTYNGQVNKGESIRVFPLSNWTELDIWQYIYQENIDIVPLYFADYRPVVERNGTLIMVDDERMPLNEGEVPEQKLVRFRTLGCYPLTGAIESSATTLTGIIEEMLLSRSSERQGRVIDHDSSGSMEKKKREGYF.

The segment at 280–302 (RQGRVIDHDSSGSMEKKKREGYF) is disordered.

This sequence belongs to the PAPS reductase family. CysD subfamily. Heterodimer composed of CysD, the smaller subunit, and CysN.

It carries out the reaction sulfate + ATP + H(+) = adenosine 5'-phosphosulfate + diphosphate. Its pathway is sulfur metabolism; hydrogen sulfide biosynthesis; sulfite from sulfate: step 1/3. In terms of biological role, with CysN forms the ATP sulfurylase (ATPS) that catalyzes the adenylation of sulfate producing adenosine 5'-phosphosulfate (APS) and diphosphate, the first enzymatic step in sulfur assimilation pathway. APS synthesis involves the formation of a high-energy phosphoric-sulfuric acid anhydride bond driven by GTP hydrolysis by CysN coupled to ATP hydrolysis by CysD. The chain is Sulfate adenylyltransferase subunit 2 from Shewanella amazonensis (strain ATCC BAA-1098 / SB2B).